The primary structure comprises 157 residues: Transcription elongation factor GreA (157 aa).

This sequence belongs to the GreA/GreB family.

Its function is as follows. Necessary for efficient RNA polymerase transcription elongation past template-encoded arresting sites. The arresting sites in DNA have the property of trapping a certain fraction of elongating RNA polymerases that pass through, resulting in locked ternary complexes. Cleavage of the nascent transcript by cleavage factors such as GreA or GreB allows the resumption of elongation from the new 3'terminus. GreA releases sequences of 2 to 3 nucleotides. The polypeptide is Transcription elongation factor GreA (Brucella abortus (strain S19)).